Consider the following 211-residue polypeptide: 2,3-bisphosphoglycerate-dependent phosphoglycerate mutase (211 aa).

Substrate-binding positions include 9–16, 22–23, R61, 88–91, K99, 115–116, and 159–160; these read RHGQSDWN, TG, ERDY, RR, and GN. The active-site Tele-phosphohistidine intermediate is the H10. E88 serves as the catalytic Proton donor/acceptor.

Belongs to the phosphoglycerate mutase family. BPG-dependent PGAM subfamily. As to quaternary structure, homodimer.

It carries out the reaction (2R)-2-phosphoglycerate = (2R)-3-phosphoglycerate. It participates in carbohydrate degradation; glycolysis; pyruvate from D-glyceraldehyde 3-phosphate: step 3/5. Its function is as follows. Catalyzes the interconversion of 2-phosphoglycerate and 3-phosphoglycerate. In Rhizobium meliloti (strain 1021) (Ensifer meliloti), this protein is 2,3-bisphosphoglycerate-dependent phosphoglycerate mutase.